Reading from the N-terminus, the 442-residue chain is DDB1- and CUL4-associated factor 12-B (442 aa).

Over residues 1 to 13 (MTRRPVSRKRRAT) the composition is skewed to basic residues. The disordered stretch occupies residues 1–31 (MTRRPVSRKRRATHGTGPGEQSDWDHSAHKR). WD repeat units follow at residues 132 to 173 (SHQS…PVCV), 177 to 215 (GHNDWIFSIAWISDTMAVSGSRDGFMALWEMTDEVVNKR), 245 to 284 (PVNCKVRALAFNGNNKELGAVSLDGFFHLWKAEQTLSKLL), and 333 to 370 (EQGSGIRSVSFYEHIVTVGTGQGALLFYDIRAQRFLED).

The protein belongs to the WD repeat DCAF12 family. Component of the DCX(DCAF12) E3 ubiquitin ligase complex, at least composed of cul4 (cul4a or cul4b), ddb1, dcaf12 and rbx1.

The protein localises to the cytoplasm. It is found in the cytoskeleton. It localises to the microtubule organizing center. The protein resides in the centrosome. Its subcellular location is the nucleus. Its pathway is protein modification; protein ubiquitination. In terms of biological role, substrate-recognition component of a DCX (DDB1-CUL4-X-box) E3 ubiquitin-protein ligase complex of the DesCEND (destruction via C-end degrons) pathway, which recognizes a C-degron located at the extreme C terminus of target proteins, leading to their ubiquitination and degradation. The C-degron recognized by the DesCEND pathway is usually a motif of less than ten residues and can be present in full-length proteins, truncated proteins or proteolytically cleaved forms. The DCX(DCAF12) complex specifically recognizes proteins with a diglutamate (Glu-Glu) at the C-terminus leading to their ubiquitination and degradation. Also directly recognizes the C-terminal glutamate-leucine (Glu-Leu) degron as an alternative degron in proteins leading to their ubiquitination and degradation. In Xenopus laevis (African clawed frog), this protein is DDB1- and CUL4-associated factor 12-B (dcaf12-b).